A 91-amino-acid polypeptide reads, in one-letter code: Small ribosomal subunit protein uS19 (91 aa).

This sequence belongs to the universal ribosomal protein uS19 family.

In terms of biological role, protein S19 forms a complex with S13 that binds strongly to the 16S ribosomal RNA. This Ralstonia pickettii (strain 12J) protein is Small ribosomal subunit protein uS19.